A 595-amino-acid polypeptide reads, in one-letter code: Beta-hexosaminidase 1 (595 aa).

A signal peptide spans 1–20 (MRFAYLATLAGSLLAGLAQA). A glycan (N-linked (GlcNAc...) asparagine) is linked at Asn313.

The protein belongs to the glycosyl hydrolase 20 family.

It carries out the reaction Hydrolysis of terminal non-reducing N-acetyl-D-hexosamine residues in N-acetyl-beta-D-hexosaminides.. Beta-hexosaminidase that shows a broad substrate specificity. The protein is Beta-hexosaminidase 1 of Coccidioides posadasii (strain RMSCC 757 / Silveira) (Valley fever fungus).